Consider the following 465-residue polypeptide: ATP synthase subunit beta (465 aa).

ATP is bound at residue 149-156 (GGAGVGKT).

The protein belongs to the ATPase alpha/beta chains family. In terms of assembly, F-type ATPases have 2 components, CF(1) - the catalytic core - and CF(0) - the membrane proton channel. CF(1) has five subunits: alpha(3), beta(3), gamma(1), delta(1), epsilon(1). CF(0) has three main subunits: a(1), b(2) and c(9-12). The alpha and beta chains form an alternating ring which encloses part of the gamma chain. CF(1) is attached to CF(0) by a central stalk formed by the gamma and epsilon chains, while a peripheral stalk is formed by the delta and b chains.

It localises to the cell inner membrane. The catalysed reaction is ATP + H2O + 4 H(+)(in) = ADP + phosphate + 5 H(+)(out). In terms of biological role, produces ATP from ADP in the presence of a proton gradient across the membrane. The catalytic sites are hosted primarily by the beta subunits. This chain is ATP synthase subunit beta, found in Dictyoglomus thermophilum (strain ATCC 35947 / DSM 3960 / H-6-12).